Reading from the N-terminus, the 220-residue chain is Protein-L-isoaspartate O-methyltransferase (220 aa).

Residue serine 69 is part of the active site.

It belongs to the methyltransferase superfamily. L-isoaspartyl/D-aspartyl protein methyltransferase family.

It is found in the cytoplasm. The enzyme catalyses [protein]-L-isoaspartate + S-adenosyl-L-methionine = [protein]-L-isoaspartate alpha-methyl ester + S-adenosyl-L-homocysteine. In terms of biological role, catalyzes the methyl esterification of L-isoaspartyl residues in peptides and proteins that result from spontaneous decomposition of normal L-aspartyl and L-asparaginyl residues. It plays a role in the repair and/or degradation of damaged proteins. This is Protein-L-isoaspartate O-methyltransferase from Alcanivorax borkumensis (strain ATCC 700651 / DSM 11573 / NCIMB 13689 / SK2).